Reading from the N-terminus, the 607-residue chain is Elongation factor 4 (607 aa).

One can recognise a tr-type G domain in the interval serine 11 to threonine 193. GTP contacts are provided by residues aspartate 23–threonine 28 and asparagine 140–aspartate 143.

The protein belongs to the TRAFAC class translation factor GTPase superfamily. Classic translation factor GTPase family. LepA subfamily.

It localises to the cell membrane. It carries out the reaction GTP + H2O = GDP + phosphate + H(+). Functionally, required for accurate and efficient protein synthesis under certain stress conditions. May act as a fidelity factor of the translation reaction, by catalyzing a one-codon backward translocation of tRNAs on improperly translocated ribosomes. Back-translocation proceeds from a post-translocation (POST) complex to a pre-translocation (PRE) complex, thus giving elongation factor G a second chance to translocate the tRNAs correctly. Binds to ribosomes in a GTP-dependent manner. This chain is Elongation factor 4, found in Bacillus mycoides (strain KBAB4) (Bacillus weihenstephanensis).